Consider the following 238-residue polypeptide: TATA-box-binding protein (238 aa).

The segment at Met1–Gly58 is disordered. The segment covering Glu27–Asp49 has biased composition (basic and acidic residues). Repeat copies occupy residues Leu65–Ile141 and Ile155–Leu232.

This sequence belongs to the TBP family. Belongs to the TFIID complex together with the TBP-associated factors (TAFs). Binds DNA as monomer.

It is found in the nucleus. In terms of biological role, general transcription factor that functions at the core of the DNA-binding multiprotein factor TFIID. Binding of TFIID to the TATA box is the initial transcriptional step of the pre-initiation complex (PIC), playing a role in the activation of eukaryotic genes transcribed by RNA polymerase II. The protein is TATA-box-binding protein (TBP1) of Candida albicans (strain SC5314 / ATCC MYA-2876) (Yeast).